Consider the following 41-residue polypeptide: Large ribosomal subunit protein bL36 (41 aa).

The protein belongs to the bacterial ribosomal protein bL36 family.

This is Large ribosomal subunit protein bL36 from Vibrio vulnificus (strain YJ016).